The primary structure comprises 128 residues: Large ribosomal subunit protein bL19 (128 aa).

It belongs to the bacterial ribosomal protein bL19 family.

In terms of biological role, this protein is located at the 30S-50S ribosomal subunit interface and may play a role in the structure and function of the aminoacyl-tRNA binding site. This is Large ribosomal subunit protein bL19 from Aromatoleum aromaticum (strain DSM 19018 / LMG 30748 / EbN1) (Azoarcus sp. (strain EbN1)).